Reading from the N-terminus, the 109-residue chain is Ribonuclease P protein component (109 aa).

It belongs to the RnpA family. As to quaternary structure, consists of a catalytic RNA component (M1 or rnpB) and a protein subunit.

The catalysed reaction is Endonucleolytic cleavage of RNA, removing 5'-extranucleotides from tRNA precursor.. Its function is as follows. RNaseP catalyzes the removal of the 5'-leader sequence from pre-tRNA to produce the mature 5'-terminus. It can also cleave other RNA substrates such as 4.5S RNA. The protein component plays an auxiliary but essential role in vivo by binding to the 5'-leader sequence and broadening the substrate specificity of the ribozyme. The polypeptide is Ribonuclease P protein component (Nitratiruptor sp. (strain SB155-2)).